Reading from the N-terminus, the 503-residue chain is Poxin-Schlafen (503 aa).

Residues 1–236 (MFYAHAFGGY…SKEERVDYVL (236 aa)) form a poxin-like region. His-15 acts as the Proton donor in catalysis. The active-site Shared with catalytic histidine of dimeric partner is Tyr-136. Lys-140 serves as the catalytic Proton acceptor; shared with catalytic histidine of dimeric partner. The segment at 237-503 (MKRLESIHHL…PDEWVSHIKF (267 aa)) is schlafen-like.

It in the N-terminal section; belongs to the poxin family. The protein in the C-terminal section; belongs to the Schlafen protein family. Subgroup poxviridae B3 subfamily. In terms of assembly, homodimer.

The enzyme catalyses 2',3'-cGAMP + H2O = Gp(2'-5')Ap(3') + H(+). Its function is as follows. Nuclease that is responsible for viral evasion of host cGAS-STING innate immunity. Cleaves 2',3'-cGAMP which is produced by host cGAS following recognition of intracellular foreign DNA and blocks the subsequent 2',3'-cGAMP-mediated activation of TMEM173/STING which normally spreads to adjacent cells and activates the interferon and NF-kappa-B immune responses. The chain is Poxin-Schlafen (OPG188) from Cynomys gunnisoni (Gunnison's prairie dog).